The primary structure comprises 433 residues: 3-phosphoshikimate 1-carboxyvinyltransferase (433 aa).

3 residues coordinate 3-phosphoshikimate: Lys-23, Ser-24, and Arg-28. Residue Lys-23 coordinates phosphoenolpyruvate. Residues Gly-95 and Arg-123 each coordinate phosphoenolpyruvate. Residues Ser-170, Ser-171, Gln-172, Ser-198, Asp-317, and Lys-344 each coordinate 3-phosphoshikimate. Residue Gln-172 participates in phosphoenolpyruvate binding. Asp-317 serves as the catalytic Proton acceptor. Residues Arg-348, Arg-391, and Lys-416 each contribute to the phosphoenolpyruvate site.

Belongs to the EPSP synthase family. In terms of assembly, monomer.

The protein resides in the cytoplasm. It catalyses the reaction 3-phosphoshikimate + phosphoenolpyruvate = 5-O-(1-carboxyvinyl)-3-phosphoshikimate + phosphate. It functions in the pathway metabolic intermediate biosynthesis; chorismate biosynthesis; chorismate from D-erythrose 4-phosphate and phosphoenolpyruvate: step 6/7. Its function is as follows. Catalyzes the transfer of the enolpyruvyl moiety of phosphoenolpyruvate (PEP) to the 5-hydroxyl of shikimate-3-phosphate (S3P) to produce enolpyruvyl shikimate-3-phosphate and inorganic phosphate. This Neisseria gonorrhoeae (strain NCCP11945) protein is 3-phosphoshikimate 1-carboxyvinyltransferase.